We begin with the raw amino-acid sequence, 217 residues long: Cytochrome b5 domain-containing protein 1 (217 aa).

The Cytochrome b5 heme-binding domain occupies 6 to 72 (PRFYTPREVS…NPKTGDVKTH (67 aa)). The heme site is built by His-41 and His-72.

This sequence belongs to the cytochrome b5 family.

It localises to the cytoplasm. It is found in the cytoskeleton. Its subcellular location is the cilium axoneme. Functionally, radial spoke stalk protein that binds heme under oxidizing conditions. Required for the coordinated beating of multiple cilia maybe by functioning in a redox signaling pathway. In Xenopus tropicalis (Western clawed frog), this protein is Cytochrome b5 domain-containing protein 1 (cyb5d1).